The primary structure comprises 332 residues: Fructose-1,6-bisphosphatase class 1 (332 aa).

Mg(2+) contacts are provided by E89, D110, L112, and D113. Substrate-binding positions include 113–116 (DGSS), N206, Y239, 257–259 (YLY), and K269. E275 contacts Mg(2+).

It belongs to the FBPase class 1 family. Homotetramer. Requires Mg(2+) as cofactor.

The protein localises to the cytoplasm. It catalyses the reaction beta-D-fructose 1,6-bisphosphate + H2O = beta-D-fructose 6-phosphate + phosphate. It functions in the pathway carbohydrate biosynthesis; gluconeogenesis. In Escherichia coli O157:H7, this protein is Fructose-1,6-bisphosphatase class 1.